The following is a 32-amino-acid chain: Photosystem II reaction center protein T (32 aa).

A helical transmembrane segment spans residues 3 to 23 (ALVYTFLLIGTLVVIFFAIFF).

It belongs to the PsbT family. PSII is composed of 1 copy each of membrane proteins PsbA, PsbB, PsbC, PsbD, PsbE, PsbF, PsbH, PsbI, PsbJ, PsbK, PsbL, PsbM, PsbT, PsbX, PsbY, PsbZ, Psb30/Ycf12, at least 3 peripheral proteins of the oxygen-evolving complex and a large number of cofactors. It forms dimeric complexes.

It localises to the plastid. The protein resides in the chloroplast thylakoid membrane. Its function is as follows. Found at the monomer-monomer interface of the photosystem II (PS II) dimer, plays a role in assembly and dimerization of PSII. PSII is a light-driven water plastoquinone oxidoreductase, using light energy to abstract electrons from H(2)O, generating a proton gradient subsequently used for ATP formation. The sequence is that of Photosystem II reaction center protein T from Emiliania huxleyi (Coccolithophore).